A 249-amino-acid polypeptide reads, in one-letter code: MVDRLANSEANTRRISIVENCFGAAGQPLTIPGRVLIGEGVLTKLCRKKPKARQFFLFNDILVYGNIVIQKKKYNKQHIIPLENVTIDSIKDEGDLRNGWLIKTPTKSFAVYAATATEKSEWMNHINKCVTDLLSKSGKTPSNEHAAVWVPDSEATVCMRCQKAKFTPVNRRHHCRKCGFVVCGPCSEKRFLLPSQSSKPVRICDFCYDLLSAGDMATCQPARSDSYSQSLKSPLNDMSDDDDDDDSSD.

The residue at position 16 (S16) is a Phosphoserine. One can recognise a PH domain in the interval 35-131; the sequence is VLIGEGVLTK…WMNHINKCVT (97 aa). An N6-acetyllysine modification is found at K44. An FYVE-type zinc finger spans residues 152–212; that stretch reads DSEATVCMRC…ICDFCYDLLS (61 aa). Zn(2+) is bound by residues C158, C161, C175, C178, C183, C186, C204, and C207. Residues 221 to 233 show a composition bias toward polar residues; that stretch reads PARSDSYSQSLKS. The disordered stretch occupies residues 221-249; that stretch reads PARSDSYSQSLKSPLNDMSDDDDDDDSSD. Positions 238-249 are enriched in acidic residues; the sequence is MSDDDDDDDSSD. S239 and S248 each carry phosphoserine.

As to quaternary structure, may interact with EEA1. In terms of tissue distribution, expressed in placenta, ovary and small intestine, as well as in heart and pancreas. Also expressed in peripheral blood mononuclear cells and dendritic cells.

It localises to the early endosome membrane. The protein localises to the endoplasmic reticulum. Functionally, may play a role in early endosome fusion upstream of RAB5, hence regulating receptor trafficking and fluid-phase transport. Enhances cellular sensitivity to TNF-induced apoptosis. The polypeptide is Pleckstrin homology domain-containing family F member 2 (PLEKHF2) (Homo sapiens (Human)).